The following is a 1356-amino-acid chain: MAYSYTEKKRIRKDFSKLPHVMDVPYLLAIQLDSYREFLQAGATKDQFRDIGLHAAFKSVFPIISYSGNAALEYVGYRLGEPAFDVKECVLRGVTFAVPLRVKVRLIIFDKESSNKAIKDIKEQEVYMGEIPLMTENGTFIINGTERVIVSQLHRSPGVFFDHDRGKTHSSGKLLYSARIIPYRGSWLDFEFDPKDAVFVRIDRRRKLPASVLLRALNYSTEEILDAFYDTNVFHVKGETLALELVPQRLRGEIATFDIKDDSGKVIVEQGRRITARHINQLDKSGIKELEMPMDYVLGRTVAKAIVHPATGEIIAECNTELTVDVMAKIVKAQVVRFETLYTNDIDCGPFISDTLKIDSTTNQLEALVEIYRMMRPGEPPTKDAAETLFNNLFFAAERYDLSAVGRMKFNRRIGRTEIEGSGVLSREDIVAVLKTLVDIRNGKGIVDDIDHLGNRRVRCVGEMAENQFRVGLVRVERAVKERLSMAESEGLMPQDLINAKPVAAAVKEFFGSSQLSQFMDQNNPLSEITHKRRVSALGPGGLTRERAGFEVRDVHPTHYGRVCPIETPEGPNIGLINSLAAYARTNQYGFLESPYRVVKDGEVTDEIVFLSAIEEADHVIAQASAKLDGRKLVDELVAVRHLNEFTVKAPEDVTLMDVSPKQVVSVAASLIPFLEHDDANRALMGSNMQRQAVPTLRSDKPLVGTGMERNVARDSGVCVVARRGGVIDSVDASRIVVRVRDDEVETGEAGVDIYNLTKYTRSNQNTCINQRPLVRKGDVVARGDIMADGPSTDMGELALGQNMRVAFMPWNGYNFEDSILLSERVVQEDRFTTIHIQELTCVSRDTKLGPEEITADIPNVGEAALNKLDEAGIVYVGAEVGPGDILVGKVTPKGETQLTPEEKLLRAIFGEKASDVKDTSLRVPTGTKGTVIDVQVFIRDGVERDSRALAIEKMQLDEIRKDLNEEFRIVEGATFERLRSALVGATAEGGAGLKKGVVITDEILDGLEHGQWFKLRMAEDALNEQLEKAQAYLSDRRQLLDDKFEDKKRKLQQGDDLAPGVLKIVKVYLAIKRRIQPGDKMAGRHGNKGVVSVIMPVEDMPHDANGTPVDIVLNPLGVPSRMNVGQILETHLGLAAKGLGEKINLMLEEQRKVAELRKFLHEIYNEIGGRQENLDDLSDQEVLDLANNLRKGVPMATPVFDGAKEREIKAMLKLADLPESGQMQLFDGRTGNAFERTTTVGYMYMLKLNHLVDDKMHARSTGSYSLVTQQPLGGKAQFGGQRFGEMEVWALEAYGAAYTLQEMLTVKSDDVNGRTKMYKNIVDGDHRMEAGMPESFNVLIKEIRSLGIDIDLETE.

The protein belongs to the RNA polymerase beta chain family. As to quaternary structure, the RNAP catalytic core consists of 2 alpha, 1 beta, 1 beta' and 1 omega subunit. When a sigma factor is associated with the core the holoenzyme is formed, which can initiate transcription.

The enzyme catalyses RNA(n) + a ribonucleoside 5'-triphosphate = RNA(n+1) + diphosphate. Its function is as follows. DNA-dependent RNA polymerase catalyzes the transcription of DNA into RNA using the four ribonucleoside triphosphates as substrates. This is DNA-directed RNA polymerase subunit beta from Stutzerimonas stutzeri (strain A1501) (Pseudomonas stutzeri).